A 403-amino-acid polypeptide reads, in one-letter code: MIPPSGAREDSGDGLTGEATGTEQPPSPASTSSLESKLQKLKRSLSFKTKSLRSKSADNFFPRTNSDVKPQADLLAKASPGPSPIAIPGSPASMPTKAGLHPGSNSKLHAFQEHVFKKPTFCDVCNHMIVGTHAKHGLRCGACKMSIHHKCADGLAPQRCMGKLPKGFRRYYSSPLLIHEQFGCIKEVMPIACGNKVDPVYEALRFGTSLAQRTKKGGSGSGSDSPPRTSTSELVDVPEEADGPGDGSDMRTRSNSVFTYPENGMDDFRDQMKTTNHQGPLSKDPLQMNTYVALYRFIPQENEDLEMRPGDMITLLEDSNEDWWKGKIQDRVGFFPANFVQRVEEHEKIYRCVRTFIGCKDQGQITLKENQICVTSEEEQDGFIRVLSGKKRGLVPLDVLVDV.

Residues 1 to 51 (MIPPSGAREDSGDGLTGEATGTEQPPSPASTSSLESKLQKLKRSLSFKTKS) are disordered. Positions 19–36 (ATGTEQPPSPASTSSLES) are enriched in polar residues. The segment covering 39 to 51 (QKLKRSLSFKTKS) has biased composition (basic residues). The Phorbol-ester/DAG-type zinc finger occupies 108–160 (LHAFQEHVFKKPTFCDVCNHMIVGTHAKHGLRCGACKMSIHHKCADGLAPQRC). The interval 212-264 (QRTKKGGSGSGSDSPPRTSTSELVDVPEEADGPGDGSDMRTRSNSVFTYPENG) is disordered. Residues 222-232 (GSDSPPRTSTS) show a composition bias toward low complexity. SH3 domains follow at residues 286 to 345 (LQMN…RVEE) and 348 to 403 (KIYR…LVDV).

In terms of assembly, interacts (via SH3 domains) with CACNA1S. Interacts with CACNA1H. Interacts with CACNA1C. As to expression, expressed predominantly in brain Detected in brain neurons, more specifically in hippocampus, cerebellum and inferior olive. Highly expressed in urinary bladder, and detected at lower levels in adrenal gland. Detected at very low levels in heart, liver, lung and kidney.

It is found in the cytoplasm. The protein resides in the cytosol. The protein localises to the cell membrane. Its subcellular location is the sarcolemma. Its function is as follows. Promotes expression of the ion channel CACNA1H at the cell membrane, and thereby contributes to the regulation of channel activity. Plays a minor and redundant role in promoting the expression of calcium channel CACNA1S at the cell membrane, and thereby contributes to increased channel activity. Slows the rate of calcium-mediated inactivation of CACNA1C calcium channel activity. This Mus musculus (Mouse) protein is SH3 and cysteine-rich domain-containing protein.